A 229-amino-acid chain; its full sequence is Protein ras-2 (229 aa).

GTP is bound at residue Gly15–Thr22. The short motif at Tyr37–Tyr45 is the Effector region element. Asp62 to Gln66 lines the GTP pocket. The tract at residues Lys109–Pro132 is disordered. The segment covering Ser111–Ala126 has biased composition (low complexity). Position 140-143 (Asn140–Asp143) interacts with GTP. A disordered region spans residues Leu188–Ile229. The span at Lys209–Pro219 shows a compositional bias: basic and acidic residues. The span at Lys220 to Ile229 shows a compositional bias: basic residues. The residue at position 226 (Cys226) is a Cysteine methyl ester. Residue Cys226 is the site of S-farnesyl cysteine attachment. Residues Leu227–Ile229 constitute a propeptide, removed in mature form.

The protein belongs to the small GTPase superfamily. Ras family.

The protein localises to the cell membrane. The catalysed reaction is GTP + H2O = GDP + phosphate + H(+). In terms of biological role, ras proteins bind GDP/GTP and possess intrinsic GTPase activity. This is Protein ras-2 (ras-2) from Neurospora crassa (strain ATCC 24698 / 74-OR23-1A / CBS 708.71 / DSM 1257 / FGSC 987).